Reading from the N-terminus, the 316-residue chain is Methionyl-tRNA formyltransferase (316 aa).

113-116 contacts (6S)-5,6,7,8-tetrahydrofolate; sequence SLLP.

The protein belongs to the Fmt family.

It carries out the reaction L-methionyl-tRNA(fMet) + (6R)-10-formyltetrahydrofolate = N-formyl-L-methionyl-tRNA(fMet) + (6S)-5,6,7,8-tetrahydrofolate + H(+). Attaches a formyl group to the free amino group of methionyl-tRNA(fMet). The formyl group appears to play a dual role in the initiator identity of N-formylmethionyl-tRNA by promoting its recognition by IF2 and preventing the misappropriation of this tRNA by the elongation apparatus. In Sodalis glossinidius (strain morsitans), this protein is Methionyl-tRNA formyltransferase.